A 156-amino-acid polypeptide reads, in one-letter code: Protein-export protein SecB (156 aa).

Belongs to the SecB family. In terms of assembly, homotetramer, a dimer of dimers. One homotetramer interacts with 1 SecA dimer.

It is found in the cytoplasm. In terms of biological role, one of the proteins required for the normal export of preproteins out of the cell cytoplasm. It is a molecular chaperone that binds to a subset of precursor proteins, maintaining them in a translocation-competent state. It also specifically binds to its receptor SecA. This chain is Protein-export protein SecB, found in Pectobacterium carotovorum subsp. carotovorum (strain PC1).